Here is a 353-residue protein sequence, read N- to C-terminus: Nicotinate-nucleotide--dimethylbenzimidazole phosphoribosyltransferase (353 aa).

The active-site Proton acceptor is the E319.

This sequence belongs to the CobT family.

It catalyses the reaction 5,6-dimethylbenzimidazole + nicotinate beta-D-ribonucleotide = alpha-ribazole 5'-phosphate + nicotinate + H(+). It functions in the pathway nucleoside biosynthesis; alpha-ribazole biosynthesis; alpha-ribazole from 5,6-dimethylbenzimidazole: step 1/2. Functionally, catalyzes the synthesis of alpha-ribazole-5'-phosphate from nicotinate mononucleotide (NAMN) and 5,6-dimethylbenzimidazole (DMB). The chain is Nicotinate-nucleotide--dimethylbenzimidazole phosphoribosyltransferase from Syntrophobacter fumaroxidans (strain DSM 10017 / MPOB).